A 219-amino-acid polypeptide reads, in one-letter code: NADH-quinone oxidoreductase subunit C (219 aa).

Belongs to the complex I 30 kDa subunit family. NDH-1 is composed of 14 different subunits. Subunits NuoB, C, D, E, F, and G constitute the peripheral sector of the complex.

It is found in the cell inner membrane. It catalyses the reaction a quinone + NADH + 5 H(+)(in) = a quinol + NAD(+) + 4 H(+)(out). NDH-1 shuttles electrons from NADH, via FMN and iron-sulfur (Fe-S) centers, to quinones in the respiratory chain. The immediate electron acceptor for the enzyme in this species is believed to be ubiquinone. Couples the redox reaction to proton translocation (for every two electrons transferred, four hydrogen ions are translocated across the cytoplasmic membrane), and thus conserves the redox energy in a proton gradient. The protein is NADH-quinone oxidoreductase subunit C of Methylorubrum populi (strain ATCC BAA-705 / NCIMB 13946 / BJ001) (Methylobacterium populi).